The chain runs to 467 residues: Receptor-like cytosolic serine/threonine-protein kinase RBK1 (467 aa).

A compositionally biased stretch (basic and acidic residues) spans 1-24; sequence MAVEDNKNSESKNHQEVELHRNDL. A disordered region spans residues 1–73; it reads MAVEDNKNSE…PFSNTTKTVS (73 aa). Positions 40 to 71 are enriched in low complexity; the sequence is SDSDNSSSSCSSCSSDDKSSSTSSPFSNTTKT. A Phosphothreonine modification is found at threonine 142. The region spanning 153–430 is the Protein kinase domain; the sequence is FNPENMIGKG…LRGEDGPAEL (278 aa). ATP is bound by residues 159-167 and lysine 181; that span reads IGKGGHAEV. Aspartate 278 (proton acceptor) is an active-site residue. Position 282 is a phosphoserine (serine 282). The residue at position 318 (threonine 318) is a Phosphothreonine. Phosphotyrosine is present on tyrosine 326.

The protein belongs to the protein kinase superfamily. Ser/Thr protein kinase family. In terms of assembly, interacts with ARAC5 and ARAC10. As to expression, mostly expressed in vasculature, hydathode endothem, leaf mesophyll cells and trichomes.

The protein localises to the cytoplasm. It is found in the endomembrane system. Its subcellular location is the nucleus. It catalyses the reaction L-seryl-[protein] + ATP = O-phospho-L-seryl-[protein] + ADP + H(+). The catalysed reaction is L-threonyl-[protein] + ATP = O-phospho-L-threonyl-[protein] + ADP + H(+). The sequence is that of Receptor-like cytosolic serine/threonine-protein kinase RBK1 (RBK1) from Arabidopsis thaliana (Mouse-ear cress).